The sequence spans 1366 residues: Collagen alpha-2(I) chain (1366 aa).

Positions 1–22 (MLSFVDTRTLLLLAVTLCLATC) are cleaved as a signal peptide. Gln23 carries the pyrrolidone carboxylic acid modification. Residues 23–79 (QSLQEETVRKGPAGDRGPRGERGPPGPPGRDGEDGPTGPPGPPGPPGPPGLGGNFAA) constitute a propeptide, N-terminal propeptide. Positions 28 to 44 (ETVRKGPAGDRGPRGER) are enriched in basic and acidic residues. Positions 28–1130 (ETVRKGPAGD…QPRSAPSLRP (1103 aa)) are disordered. 6 positions are modified to 4-hydroxyproline: Pro47, Pro50, Pro62, Pro65, Pro68, and Pro71. The segment covering 59–71 (TGPPGPPGPPGPP) has biased composition (pro residues). Gln80 carries the pyrrolidone carboxylic acid modification. Lys84 carries the post-translational modification Allysine. Residues 84 to 94 (KGVGLGPGPMG) are compositionally biased toward gly residues. Residues 95 to 140 (LMGPRGPPGAAGAPGPQGFQGPAGEPGEPGQTGPAGARGPAGPPGK) are compositionally biased toward low complexity. A 4-hydroxyproline mark is found at Pro102 and Pro108. Residues 141–155 (AGEDGHPGKPGRPGE) are compositionally biased toward basic and acidic residues. Lys177 carries the post-translational modification 5-hydroxylysine; alternate. Lys177 carries O-linked (Gal...) hydroxylysine; alternate glycosylation. Low complexity-rich tracts occupy residues 225–254 (VGAPGPAGARGSDGSVGPVGPAGPIGSAGP), 269–293 (AVGNAGPAGPAGPRGEVGLPGLSGP), 300–321 (PGANGLTGAKGAAGLPGVAGAP), 330–345 (PGPVGAAGATGARGLV), 398–410 (LRGSPGSRGLPGA), and 419–434 (PPGSRGASGPAGVRGP). 3 positions are modified to 4-hydroxyproline: Pro420, Pro441, and Pro444. Low complexity-rich tracts occupy residues 470–489 (LPGIDGRPGPIGPAGARGEP) and 513–531 (AGLAGARGAPGPDGNNGAQ). Over residues 538–547 (GVQGGKGEQG) the composition is skewed to gly residues. 4 stretches are compositionally biased toward low complexity: residues 594–611 (PGESGAAGPTGPIGSRGP), 623–648 (EPGVVGAVGTAGPSGPSGLPGERGAA), 663–710 (RGEI…PRGS), and 717–737 (VGPAGPNGFAGPAGAAGQPGA). The segment covering 738-747 (KGERGAKGPK) has biased composition (basic and acidic residues). A compositionally biased stretch (low complexity) spans 752-765 (VVGPTGPVGAAGPA). Over residues 775–784 (GSRGDGGPPG) the composition is skewed to gly residues. 5 stretches are compositionally biased toward low complexity: residues 786–795 (TGFPGAAGRT), 849–876 (SGEAGTAGPPGTPGPQGLLGAPGILGLP), 884–932 (LPGV…NPGN), 956–974 (PVGAAGAPGPHGPVGPAGK), and 983–1001 (PSGPVGPAGAVGPRGPSGP). Over residues 1005-1016 (RGDKGEPGEKGP) the composition is skewed to basic and acidic residues. Residues 1089-1101 (AGPPGPPGPPGPP) show a composition bias toward pro residues. The propeptide at 1120 to 1366 (DQPRSAPSLR…FVDIGPVCFK (247 aa)) is C-terminal propeptide. Residues 1133–1366 (YEVDATLKSL…FVDIGPVCFK (234 aa)) form the Fibrillar collagen NC1 domain. 3 disulfide bridges follow: Cys1163–Cys1195, Cys1203–Cys1364, and Cys1272–Cys1317. Positions 1181, 1183, 1184, 1186, and 1189 each coordinate Ca(2+). Asn1267 carries N-linked (GlcNAc...) asparagine glycosylation.

This sequence belongs to the fibrillar collagen family. In terms of assembly, trimers of one alpha 2(I) and two alpha 1(I) chains. Interacts (via C-terminus) with TMEM131 (via PapD-L domain); the interaction is direct and is involved in assembly and TRAPPIII ER-to-Golgi transport complex-dependent secretion of collagen. Post-translationally, prolines at the third position of the tripeptide repeating unit (G-X-Y) are hydroxylated in some or all of the chains. As to expression, forms the fibrils of tendon, ligaments and bones. In bones the fibrils are mineralized with calcium hydroxyapatite.

The protein resides in the secreted. It localises to the extracellular space. The protein localises to the extracellular matrix. Its function is as follows. Type I collagen is a member of group I collagen (fibrillar forming collagen). In Homo sapiens (Human), this protein is Collagen alpha-2(I) chain (COL1A2).